The following is a 220-amino-acid chain: Octanoyltransferase (220 aa).

The BPL/LPL catalytic domain occupies 29 to 217 (GRAPEMIWLL…CFEETFGPLP (189 aa)). Substrate contacts are provided by residues 68 to 75 (RGGQYTYH), 148 to 150 (AIG), and 161 to 163 (GLS). Cys-179 serves as the catalytic Acyl-thioester intermediate.

This sequence belongs to the LipB family.

The protein localises to the cytoplasm. It carries out the reaction octanoyl-[ACP] + L-lysyl-[protein] = N(6)-octanoyl-L-lysyl-[protein] + holo-[ACP] + H(+). It functions in the pathway protein modification; protein lipoylation via endogenous pathway; protein N(6)-(lipoyl)lysine from octanoyl-[acyl-carrier-protein]: step 1/2. In terms of biological role, catalyzes the transfer of endogenously produced octanoic acid from octanoyl-acyl-carrier-protein onto the lipoyl domains of lipoate-dependent enzymes. Lipoyl-ACP can also act as a substrate although octanoyl-ACP is likely to be the physiological substrate. The chain is Octanoyltransferase from Dinoroseobacter shibae (strain DSM 16493 / NCIMB 14021 / DFL 12).